We begin with the raw amino-acid sequence, 43 residues long: Myotoxin-2 (43 aa).

Cystine bridges form between Cys4/Cys36, Cys11/Cys30, and Cys18/Cys37.

Belongs to the crotamine-myotoxin family. In terms of assembly, monomer. In terms of tissue distribution, expressed by the venom gland.

The protein localises to the secreted. Its function is as follows. Cationic peptide that possesses multiple functions. It acts as a cell-penetrating peptide (CPP), and as a potent voltage-gated potassium channel (Kv) inhibitor. It exhibits antimicrobial activities, hind limb paralysis, and severe muscle necrosis by a non-enzymatic mechanism. The polypeptide is Myotoxin-2 (Crotalus concolor (Midget faded rattlesnake)).